Reading from the N-terminus, the 417-residue chain is Hydrogen cyanide synthase subunit HcnC (417 aa).

The signal sequence occupies residues 1–18 (MIKHYDVVIAGGGVIGAS). 7 to 21 (VVIAGGGVIGASCAY) contacts FAD. Cysteine 19 carries N-palmitoyl cysteine lipidation. Cysteine 19 is lipidated: S-diacylglycerol cysteine. A helical transmembrane segment spans residues 46 to 66 (SAGGLWAIGESVGLGCGVIFF).

This sequence belongs to the FAD-dependent glycerol-3-phosphate dehydrogenase family. Heterotrimer of HcnA, HcnB and HcnC.

Its subcellular location is the cell membrane. It carries out the reaction glycine + 2 A = hydrogen cyanide + 2 AH2 + CO2. Functionally, a three-component membrane-bound flavoenzyme that catalyzes the formation of hydrogen cyanide, a secondary metabolite, by transfer of electrons to a cyanide-resistant branch of the aerobic respiratory chain. Contributes to suppression of black root rot of tobacco. The polypeptide is Hydrogen cyanide synthase subunit HcnC (Pseudomonas protegens (strain DSM 19095 / LMG 27888 / CFBP 6595 / CHA0)).